A 548-amino-acid chain; its full sequence is Membrane protein insertase YidC (548 aa).

The chain crosses the membrane as a helical span at residues 6–26 (NLLVIALLFVSFMIWQAWEQD). The disordered stretch occupies residues 28 to 55 (NPQPQAQQTTQTTTTAAGSAADQGVPAS). The span at 30 to 50 (QPQAQQTTQTTTTAAGSAADQ) shows a compositional bias: low complexity. Transmembrane regions (helical) follow at residues 350–370 (FVGN…GIMY), 420–440 (LGGC…YYML), 458–478 (LSAQ…MFFI), and 499–519 (PVIF…YYIV).

It belongs to the OXA1/ALB3/YidC family. Type 1 subfamily. In terms of assembly, interacts with the Sec translocase complex via SecD. Specifically interacts with transmembrane segments of nascent integral membrane proteins during membrane integration.

The protein resides in the cell inner membrane. Its function is as follows. Required for the insertion and/or proper folding and/or complex formation of integral membrane proteins into the membrane. Involved in integration of membrane proteins that insert both dependently and independently of the Sec translocase complex, as well as at least some lipoproteins. Aids folding of multispanning membrane proteins. The protein is Membrane protein insertase YidC of Shigella boydii serotype 18 (strain CDC 3083-94 / BS512).